Here is a 475-residue protein sequence, read N- to C-terminus: Sulfate adenylyltransferase subunit 1 (475 aa).

A tr-type G domain is found at 25-240; sequence KSLLRFLTCG…VLETVEVINL (216 aa). The segment at 34–41 is G1; it reads GSVDDGKS. 34 to 41 contributes to the GTP binding site; the sequence is GSVDDGKS. Residues 92 to 96 form a G2 region; it reads GITID. The G3 stretch occupies residues 113–116; that stretch reads DTPG. Residues 113 to 117 and 168 to 171 each bind GTP; these read DTPGH and NKMD. The segment at 168–171 is G4; the sequence is NKMD. A G5 region spans residues 206-208; that stretch reads SAL.

Belongs to the TRAFAC class translation factor GTPase superfamily. Classic translation factor GTPase family. CysN/NodQ subfamily. In terms of assembly, heterodimer composed of CysD, the smaller subunit, and CysN.

The catalysed reaction is sulfate + ATP + H(+) = adenosine 5'-phosphosulfate + diphosphate. The protein operates within sulfur metabolism; hydrogen sulfide biosynthesis; sulfite from sulfate: step 1/3. With CysD forms the ATP sulfurylase (ATPS) that catalyzes the adenylation of sulfate producing adenosine 5'-phosphosulfate (APS) and diphosphate, the first enzymatic step in sulfur assimilation pathway. APS synthesis involves the formation of a high-energy phosphoric-sulfuric acid anhydride bond driven by GTP hydrolysis by CysN coupled to ATP hydrolysis by CysD. The protein is Sulfate adenylyltransferase subunit 1 of Sodalis glossinidius (strain morsitans).